A 228-amino-acid polypeptide reads, in one-letter code: Sec-independent protein translocase protein TatB (228 aa).

A helical transmembrane segment spans residues 1–21 (MFDFGLGELIFVGIIALIVLG). Disordered regions lie at residues 106-164 (TPAD…TDKD) and 196-228 (VPHT…VRKS). Basic and acidic residues predominate over residues 135–151 (PSERSDTSAETLGDDRQ). Over residues 206–228 (AINRKRDFRPKHRAKPKLRVRKS) the composition is skewed to basic residues.

The protein belongs to the TatB family. As to quaternary structure, the Tat system comprises two distinct complexes: a TatABC complex, containing multiple copies of TatA, TatB and TatC subunits, and a separate TatA complex, containing only TatA subunits. Substrates initially bind to the TatABC complex, which probably triggers association of the separate TatA complex to form the active translocon.

It is found in the cell inner membrane. In terms of biological role, part of the twin-arginine translocation (Tat) system that transports large folded proteins containing a characteristic twin-arginine motif in their signal peptide across membranes. Together with TatC, TatB is part of a receptor directly interacting with Tat signal peptides. TatB may form an oligomeric binding site that transiently accommodates folded Tat precursor proteins before their translocation. The polypeptide is Sec-independent protein translocase protein TatB (Neisseria gonorrhoeae (strain ATCC 700825 / FA 1090)).